The sequence spans 405 residues: Growth/differentiation factor 11 (405 aa).

The first 24 residues, 1–24, serve as a signal peptide directing secretion; the sequence is MVLAAPLLLGFLLLALELRPRGEA. Residues 25–296 constitute a propeptide that is removed on maturation; it reads AEGPAAAAAA…VLENTKRSRR (272 aa). Residue asparagine 92 is glycosylated (N-linked (GlcNAc...) asparagine). Cystine bridges form between cysteine 302–cysteine 312, cysteine 311–cysteine 370, cysteine 339–cysteine 402, and cysteine 343–cysteine 404.

The protein belongs to the TGF-beta family. In terms of assembly, homodimer; disulfide-linked. Interacts directly with ACVR2B. Interacts directly with ACVR2A. Interacts with ACVR1B, TGFBR1 and ACVR1C in an ACVR2B-dependent manner. Interacts with FST isoform 2/FS288. Synthesized as large precursor molecule that undergoes proteolytic cleavage by furin-like proteases. This produces an inactive form consisting of the mature C-terminal portion non-covalently bound to its cleaved N-terminal propeptide. Activation of the mature form requires additional cleavage of the propeptide by a tolloid-like metalloproteinase.

Its subcellular location is the secreted. In terms of biological role, secreted signal that acts globally to regulate anterior/posterior axial patterning during development. May play critical roles in patterning both mesodermal and neural tissues. It is required for proper vertebral patterning and orofacial development. Signals through activin receptors type-2, ACVR2A and ACVR2B, and activin receptors type-1, ACVR1B, ACVR1C and TGFBR1 leading to the phosphorylation of SMAD2 and SMAD3. The chain is Growth/differentiation factor 11 (Gdf11) from Rattus norvegicus (Rat).